Here is a 78-residue protein sequence, read N- to C-terminus: uncharacterized protein (78 aa).

Basic and acidic residues predominate over residues 56–66 (ERANAGKRVSE). The interval 56 to 78 (ERANAGKRVSEEEQINGKRKRKD) is disordered.

This is an uncharacterized protein from Saccharomyces cerevisiae (strain ATCC 204508 / S288c) (Baker's yeast).